The primary structure comprises 54 residues: Rubredoxin (54 aa).

Met1 is modified (N-formylmethionine). The Rubredoxin-like domain maps to 1 to 54 (MKKYTCTVCGYIYNPEDGDPDNGVNPGTDFKDIPDDWVCPLCGVGKDQFEEVEE). Residues Cys6, Cys9, Cys39, and Cys42 each coordinate Fe cation.

It belongs to the rubredoxin family. Fe(3+) serves as cofactor.

Its function is as follows. Rubredoxin is a small nonheme, iron protein lacking acid-labile sulfide. Its single Fe, chelated to 4 Cys, functions as an electron acceptor and may also stabilize the conformation of the molecule. This Clostridium pasteurianum protein is Rubredoxin.